Here is a 364-residue protein sequence, read N- to C-terminus: UDP-N-acetylglucosamine--N-acetylmuramyl-(pentapeptide) pyrophosphoryl-undecaprenol N-acetylglucosamine transferase (364 aa).

UDP-N-acetyl-alpha-D-glucosamine contacts are provided by residues 13–15, Asn125, Arg165, Ser192, and Gln293; that span reads TGG.

The protein belongs to the glycosyltransferase 28 family. MurG subfamily.

It localises to the cell inner membrane. It catalyses the reaction di-trans,octa-cis-undecaprenyl diphospho-N-acetyl-alpha-D-muramoyl-L-alanyl-D-glutamyl-meso-2,6-diaminopimeloyl-D-alanyl-D-alanine + UDP-N-acetyl-alpha-D-glucosamine = di-trans,octa-cis-undecaprenyl diphospho-[N-acetyl-alpha-D-glucosaminyl-(1-&gt;4)]-N-acetyl-alpha-D-muramoyl-L-alanyl-D-glutamyl-meso-2,6-diaminopimeloyl-D-alanyl-D-alanine + UDP + H(+). It participates in cell wall biogenesis; peptidoglycan biosynthesis. In terms of biological role, cell wall formation. Catalyzes the transfer of a GlcNAc subunit on undecaprenyl-pyrophosphoryl-MurNAc-pentapeptide (lipid intermediate I) to form undecaprenyl-pyrophosphoryl-MurNAc-(pentapeptide)GlcNAc (lipid intermediate II). The protein is UDP-N-acetylglucosamine--N-acetylmuramyl-(pentapeptide) pyrophosphoryl-undecaprenol N-acetylglucosamine transferase of Cereibacter sphaeroides (strain ATCC 17025 / ATH 2.4.3) (Rhodobacter sphaeroides).